Consider the following 228-residue polypeptide: UPF0173 metal-dependent hydrolase LMOf2365_1599 (228 aa).

Belongs to the UPF0173 family.

This Listeria monocytogenes serotype 4b (strain F2365) protein is UPF0173 metal-dependent hydrolase LMOf2365_1599.